The sequence spans 200 residues: Large ribosomal subunit protein uL4 (200 aa).

The disordered stretch occupies residues 42 to 65 (TRAQKTRSEVSGGGAKPWRQKGTG).

Belongs to the universal ribosomal protein uL4 family. As to quaternary structure, part of the 50S ribosomal subunit.

Its function is as follows. One of the primary rRNA binding proteins, this protein initially binds near the 5'-end of the 23S rRNA. It is important during the early stages of 50S assembly. It makes multiple contacts with different domains of the 23S rRNA in the assembled 50S subunit and ribosome. Forms part of the polypeptide exit tunnel. This Vibrio atlanticus (strain LGP32) (Vibrio splendidus (strain Mel32)) protein is Large ribosomal subunit protein uL4.